A 138-amino-acid polypeptide reads, in one-letter code: Probable glycine cleavage system H protein 1 (138 aa).

The 83-residue stretch at Ile-30 to Lys-112 folds into the Lipoyl-binding domain. An N6-lipoyllysine modification is found at Lys-71.

This sequence belongs to the GcvH family. As to quaternary structure, the glycine cleavage system is composed of four proteins: P, T, L and H. (R)-lipoate is required as a cofactor.

Functionally, the glycine cleavage system catalyzes the degradation of glycine. The H protein shuttles the methylamine group of glycine from the P protein to the T protein. In Sulfolobus acidocaldarius (strain ATCC 33909 / DSM 639 / JCM 8929 / NBRC 15157 / NCIMB 11770), this protein is Probable glycine cleavage system H protein 1.